The chain runs to 241 residues: Zinc finger CCHC domain-containing protein 17 (241 aa).

An S1 motif domain is found at 16–88; it reads YTIFQGEVAM…DRIKVSLSMK (73 aa). Position 114 is a phosphoserine (S114). The segment at 131-148 adopts a CCHC-type zinc-finger fold; it reads TTCKKCGCKGHFAKDCFM. Position 144 is an N6-acetyllysine (K144). The interval 160–241 is disordered; the sequence is EEEEEKEEAK…KKKHKKKHKE (82 aa). Positions 166–178 are enriched in basic and acidic residues; that stretch reads EEAKAEGLEKPDP. A compositionally biased stretch (basic residues) spans 182 to 198; sequence SSRKRKKEKKKKKHRDR. Position 183 is a phosphoserine (S183). Positions 211-225 are enriched in basic and acidic residues; sequence DTGKKARHSSKDSKA. The span at 226–241 shows a compositional bias: basic residues; sequence TKKKKKKKKHKKKHKE.

As to quaternary structure, interacts with PNN. Associates with the 60S ribosomal subunit. Expressed in liver, brain, heart, kidney testis, stomach, small intestine, skin, thymus, uterus, placenta, spleen, lung and skeletal muscle.

The protein localises to the nucleus. The protein resides in the nucleolus. The protein is Zinc finger CCHC domain-containing protein 17 (Zcchc17) of Mus musculus (Mouse).